The following is a 39-amino-acid chain: MSNTGRIPLWLVGLVGGLAVITMLSLFLYGAYSGLGSSL.

Residues 7–27 (IPLWLVGLVGGLAVITMLSLF) form a helical membrane-spanning segment.

The protein belongs to the PsbJ family. PSII is composed of 1 copy each of membrane proteins PsbA, PsbB, PsbC, PsbD, PsbE, PsbF, PsbH, PsbI, PsbJ, PsbK, PsbL, PsbM, PsbT, PsbX, PsbY, PsbZ, Psb30/Ycf12, at least 3 peripheral proteins of the oxygen-evolving complex and a large number of cofactors. It forms dimeric complexes.

It localises to the plastid. The protein localises to the chloroplast thylakoid membrane. Functionally, one of the components of the core complex of photosystem II (PSII). PSII is a light-driven water:plastoquinone oxidoreductase that uses light energy to abstract electrons from H(2)O, generating O(2) and a proton gradient subsequently used for ATP formation. It consists of a core antenna complex that captures photons, and an electron transfer chain that converts photonic excitation into a charge separation. The protein is Photosystem II reaction center protein J of Trieres chinensis (Marine centric diatom).